A 287-amino-acid polypeptide reads, in one-letter code: Protease HtpX (287 aa).

2 helical membrane passes run 4 to 24 (IFLL…VMSI) and 33 to 53 (GGLL…SLAI). Histidine 139 contributes to the Zn(2+) binding site. Glutamate 140 is an active-site residue. Histidine 143 contributes to the Zn(2+) binding site. 2 helical membrane passes run 154 to 174 (LIQG…AGII) and 195 to 215 (AVVF…VAYF). Glutamate 220 lines the Zn(2+) pocket.

Belongs to the peptidase M48B family. The cofactor is Zn(2+).

Its subcellular location is the cell inner membrane. In Shewanella baltica (strain OS185), this protein is Protease HtpX.